The following is a 284-amino-acid chain: Polyamine aminopropyltransferase (284 aa).

A PABS domain is found at 2-237 (ELWYTEKHTE…GHWLFGFASK (236 aa)). Glutamine 31 serves as a coordination point for S-methyl-5'-thioadenosine. Spermidine contacts are provided by histidine 62 and aspartate 86. S-methyl-5'-thioadenosine is bound by residues glutamate 106 and 137 to 138 (DG). Aspartate 155 acts as the Proton acceptor in catalysis. 155-158 (DSTD) provides a ligand contact to spermidine. Proline 162 contacts S-methyl-5'-thioadenosine.

The protein belongs to the spermidine/spermine synthase family. In terms of assembly, homodimer or homotetramer.

It localises to the cytoplasm. The enzyme catalyses S-adenosyl 3-(methylsulfanyl)propylamine + putrescine = S-methyl-5'-thioadenosine + spermidine + H(+). The protein operates within amine and polyamine biosynthesis; spermidine biosynthesis; spermidine from putrescine: step 1/1. In terms of biological role, catalyzes the irreversible transfer of a propylamine group from the amino donor S-adenosylmethioninamine (decarboxy-AdoMet) to putrescine (1,4-diaminobutane) to yield spermidine. The chain is Polyamine aminopropyltransferase from Clostridium botulinum (strain Alaska E43 / Type E3).